A 340-amino-acid chain; its full sequence is Eukaryotic translation initiation factor 3 subunit I (340 aa).

WD repeat units follow at residues 8-47, 50-91, 150-189, 194-233, and 291-330; these read GHER…RLGT, GHQG…KVWD, CTES…QLEN, EFDH…ILKT, and GHFG…FDFM.

The protein belongs to the eIF-3 subunit I family. As to quaternary structure, component of the eukaryotic translation initiation factor 3 (eIF-3) complex.

It localises to the cytoplasm. Its function is as follows. Component of the eukaryotic translation initiation factor 3 (eIF-3) complex, which is involved in protein synthesis of a specialized repertoire of mRNAs and, together with other initiation factors, stimulates binding of mRNA and methionyl-tRNAi to the 40S ribosome. The eIF-3 complex specifically targets and initiates translation of a subset of mRNAs involved in cell proliferation. The protein is Eukaryotic translation initiation factor 3 subunit I (tif34) of Aspergillus fumigatus (strain CBS 144.89 / FGSC A1163 / CEA10) (Neosartorya fumigata).